Here is a 283-residue protein sequence, read N- to C-terminus: E3 ubiquitin-protein ligase SGR9, amyloplastic (283 aa).

The transit peptide at 1–32 (MEDENTTIIMASLSALSPSHLTNLTHSILSIS) directs the protein to the amyloplast. The segment at 214–255 (CVICKEEMSEGRDVCEMPCQHFFHWKCILPWLSKKNTCPFCR) adopts an RING-type; atypical zinc-finger fold.

Post-translationally, auto-ubiquitinated as part of the enzymatic reaction. Expressed in seedlings, hypocotyls, roots and stems. Present especially in hypocotyl and inflorescence endodermis, as well as in root cap columella, tissues that act as statocytes.

The protein resides in the plastid. It is found in the amyloplast. The enzyme catalyses S-ubiquitinyl-[E2 ubiquitin-conjugating enzyme]-L-cysteine + [acceptor protein]-L-lysine = [E2 ubiquitin-conjugating enzyme]-L-cysteine + N(6)-ubiquitinyl-[acceptor protein]-L-lysine.. It functions in the pathway protein modification; protein ubiquitination. Functionally, E3 ubiquitin-protein ligase which accepts ubiquitin from an E2 ubiquitin-conjugating enzyme in the form of a thioester and then directly transfers the ubiquitin to targeted substrates. Modulates amyloplast dynamics and sedimentation in statocytes during inflorescence, hypocotyl and root gravitropism, probably by regulating amyloplast interaction with actin filaments (AFs) in endodermal cells. The protein is E3 ubiquitin-protein ligase SGR9, amyloplastic (SGR9) of Arabidopsis thaliana (Mouse-ear cress).